Here is a 439-residue protein sequence, read N- to C-terminus: Damage-control phosphatase ARMT1 (439 aa).

The residue at position 2 (Ala2) is an N-acetylalanine. Ser4 carries the post-translational modification Phosphoserine. Lys40 is subject to N6-acetyllysine. Mn(2+)-binding residues include Asp251 and Asn252. 251-252 (DN) contributes to the substrate binding site. 2 residues coordinate S-adenosyl-L-methionine: Glu256 and Asp289. Asp289 provides a ligand contact to Mn(2+). Residues 365–369 (DLNYR) and Lys402 contribute to the substrate site. The short motif at 399-402 (RTLK) is the Subfamily III RTxK motif element.

The protein belongs to the damage-control phosphatase family. Sugar phosphate phosphatase III subfamily. The cofactor is Mn(2+). Requires Ni(2+) as cofactor. Automethylated.

The catalysed reaction is beta-D-fructose 1-phosphate + H2O = D-fructose + phosphate. The enzyme catalyses beta-D-fructose 6-phosphate = dihydroxyacetone + D-glyceraldehyde 3-phosphate. It carries out the reaction L-glutamyl-[protein] + S-adenosyl-L-methionine = [protein]-L-glutamate 5-O-methyl ester + S-adenosyl-L-homocysteine. Functionally, metal-dependent phosphatase that shows phosphatase activity against several substrates, including fructose-1-phosphate and fructose-6-phosphate. Its preference for fructose-1-phosphate, a strong glycating agent that causes DNA damage rather than a canonical yeast metabolite, suggests a damage-control function in hexose phosphate metabolism. Has also been shown to have O-methyltransferase activity that methylates glutamate residues of target proteins to form gamma-glutamyl methyl ester residues. Possibly methylates PCNA, suggesting it is involved in the DNA damage response. The chain is Damage-control phosphatase ARMT1 from Rattus norvegicus (Rat).